Reading from the N-terminus, the 243-residue chain is MRYLVDTHTHTIVSGHAYTTFLENVQEASNIGLKVLGTTDHGPSMPGGPNLFYFNNFKVMPRKLKGVTLLHGCEANIIDFKGMLDIPDFTQKKLDVIIASLHDVCIRPGSVEENTEALINVMENPYVDILGHIGNPSFPINEEVVVKKAKEKNVLIEINNGSFVSRKGSEETCKKVANLCKKHKVNIIVGSDSHVCFQIGRFPKADNMLKEIGMPEELIINNEENKILEYLKNKGKLKDLNLD.

Zn(2+)-binding residues include H8, H10, H16, H41, E74, H102, H132, D192, and H194.

It belongs to the PHP family. The cofactor is Zn(2+).

The sequence is that of Probable phosphatase CLD_1129 from Clostridium botulinum (strain Okra / Type B1).